The chain runs to 507 residues: ATP synthase subunit alpha, mitochondrial (507 aa).

ATP is bound at residue 171–178 (GDRQTGKT).

It belongs to the ATPase alpha/beta chains family. In terms of assembly, F-type ATPases have 2 components, CF(1) - the catalytic core - and CF(0) - the membrane proton channel. CF(1) has five subunits: alpha(3), beta(3), gamma(1), delta(1), epsilon(1). CF(0) has three main subunits: a, b and c.

It is found in the mitochondrion. It localises to the mitochondrion inner membrane. Functionally, mitochondrial membrane ATP synthase (F(1)F(0) ATP synthase or Complex V) produces ATP from ADP in the presence of a proton gradient across the membrane which is generated by electron transport complexes of the respiratory chain. F-type ATPases consist of two structural domains, F(1) - containing the extramembraneous catalytic core, and F(0) - containing the membrane proton channel, linked together by a central stalk and a peripheral stalk. During catalysis, ATP synthesis in the catalytic domain of F(1) is coupled via a rotary mechanism of the central stalk subunits to proton translocation. Subunits alpha and beta form the catalytic core in F(1). Rotation of the central stalk against the surrounding alpha(3)beta(3) subunits leads to hydrolysis of ATP in three separate catalytic sites on the beta subunits. Subunit alpha does not bear the catalytic high-affinity ATP-binding sites. This is ATP synthase subunit alpha, mitochondrial (ATPA) from Brassica napus (Rape).